Consider the following 254-residue polypeptide: Acidic endochitinase (254 aa).

Residues 1-23 (MKFWGSVLALSFVVFLFLTGTLA) form the signal peptide. Glu-91 serves as the catalytic Proton donor. A disulfide bridge connects residues Cys-213 and Cys-245.

It belongs to the glycosyl hydrolase 19 family. Chitinase class II subfamily.

The protein localises to the secreted. The enzyme catalyses Random endo-hydrolysis of N-acetyl-beta-D-glucosaminide (1-&gt;4)-beta-linkages in chitin and chitodextrins.. In terms of biological role, defense against chitin-containing fungal pathogens. The polypeptide is Acidic endochitinase (Petunia hybrida (Petunia)).